The sequence spans 766 residues: 5-methyltetrahydropteroyltriglutamate--homocysteine methyltransferase (766 aa).

Residues 16–19 and Lys-122 each bind 5-methyltetrahydropteroyltri-L-glutamate; that span reads RELK. Residues 443–445 and Glu-496 contribute to the L-homocysteine site; that span reads IGS. Residues 443–445 and Glu-496 each bind L-methionine; that span reads IGS. 5-methyltetrahydropteroyltri-L-glutamate contacts are provided by residues 527-528 and Trp-573; that span reads RC. Asp-611 contributes to the L-homocysteine binding site. Asp-611 serves as a coordination point for L-methionine. Glu-617 contacts 5-methyltetrahydropteroyltri-L-glutamate. 3 residues coordinate Zn(2+): His-653, Cys-655, and Glu-677. His-706 functions as the Proton donor in the catalytic mechanism. Residue Cys-738 participates in Zn(2+) binding.

The protein belongs to the vitamin-B12 independent methionine synthase family. Zn(2+) serves as cofactor.

The catalysed reaction is 5-methyltetrahydropteroyltri-L-glutamate + L-homocysteine = tetrahydropteroyltri-L-glutamate + L-methionine. Its pathway is amino-acid biosynthesis; L-methionine biosynthesis via de novo pathway; L-methionine from L-homocysteine (MetE route): step 1/1. Functionally, catalyzes the transfer of a methyl group from 5-methyltetrahydrofolate to homocysteine resulting in methionine formation. This chain is 5-methyltetrahydropteroyltriglutamate--homocysteine methyltransferase, found in Pseudomonas putida (strain W619).